Here is a 252-residue protein sequence, read N- to C-terminus: Imidazole glycerol phosphate synthase subunit HisF (252 aa).

Active-site residues include Asp11 and Asp130.

It belongs to the HisA/HisF family. In terms of assembly, heterodimer of HisH and HisF.

It is found in the cytoplasm. The catalysed reaction is 5-[(5-phospho-1-deoxy-D-ribulos-1-ylimino)methylamino]-1-(5-phospho-beta-D-ribosyl)imidazole-4-carboxamide + L-glutamine = D-erythro-1-(imidazol-4-yl)glycerol 3-phosphate + 5-amino-1-(5-phospho-beta-D-ribosyl)imidazole-4-carboxamide + L-glutamate + H(+). The protein operates within amino-acid biosynthesis; L-histidine biosynthesis; L-histidine from 5-phospho-alpha-D-ribose 1-diphosphate: step 5/9. In terms of biological role, IGPS catalyzes the conversion of PRFAR and glutamine to IGP, AICAR and glutamate. The HisF subunit catalyzes the cyclization activity that produces IGP and AICAR from PRFAR using the ammonia provided by the HisH subunit. The sequence is that of Imidazole glycerol phosphate synthase subunit HisF from Petrotoga mobilis (strain DSM 10674 / SJ95).